Consider the following 180-residue polypeptide: Large ribosomal subunit protein uL5 (180 aa).

The protein belongs to the universal ribosomal protein uL5 family. As to quaternary structure, forms a bridge to the 30S subunit in the 70S ribosome. Part of the 50S ribosomal subunit; part of the 5S rRNA/L5/L18/L25 (CTC) subcomplex. Is known to contact the 5S rRNA, 23S rRNA and the P site tRNA.

This is one of the proteins that bind and probably mediate the attachment of the 5S RNA into the large ribosomal subunit, where it forms part of the central protuberance. In the 70S ribosome it contacts protein S13 of the 30S subunit (bridge B1b), connecting the 2 subunits; this bridge is implicated in subunit movement. Contacts the P site tRNA; the 5S rRNA and some of its associated proteins might help stabilize positioning of ribosome-bound tRNAs. This Deinococcus radiodurans (strain ATCC 13939 / DSM 20539 / JCM 16871 / CCUG 27074 / LMG 4051 / NBRC 15346 / NCIMB 9279 / VKM B-1422 / R1) protein is Large ribosomal subunit protein uL5 (rplE).